Reading from the N-terminus, the 258-residue chain is Ribosomal protein L11 methyltransferase (258 aa).

Thr-117, Gly-138, Asp-160, and Asn-201 together coordinate S-adenosyl-L-methionine.

Belongs to the methyltransferase superfamily. PrmA family.

The protein localises to the cytoplasm. It carries out the reaction L-lysyl-[protein] + 3 S-adenosyl-L-methionine = N(6),N(6),N(6)-trimethyl-L-lysyl-[protein] + 3 S-adenosyl-L-homocysteine + 3 H(+). Functionally, methylates ribosomal protein L11. This chain is Ribosomal protein L11 methyltransferase, found in Thermosipho melanesiensis (strain DSM 12029 / CIP 104789 / BI429).